A 643-amino-acid polypeptide reads, in one-letter code: Phosphomethylpyrimidine synthase (643 aa).

Substrate contacts are provided by residues N248, M277, Y306, H342, 362-364, 403-406, and E442; these read SRG and DGLR. Residue H446 coordinates Zn(2+). Y469 lines the substrate pocket. Residue H510 coordinates Zn(2+). [4Fe-4S] cluster-binding residues include C590, C593, and C598.

The protein belongs to the ThiC family. Homodimer. It depends on [4Fe-4S] cluster as a cofactor.

The catalysed reaction is 5-amino-1-(5-phospho-beta-D-ribosyl)imidazole + S-adenosyl-L-methionine = 4-amino-2-methyl-5-(phosphooxymethyl)pyrimidine + CO + 5'-deoxyadenosine + formate + L-methionine + 3 H(+). It participates in cofactor biosynthesis; thiamine diphosphate biosynthesis. Catalyzes the synthesis of the hydroxymethylpyrimidine phosphate (HMP-P) moiety of thiamine from aminoimidazole ribotide (AIR) in a radical S-adenosyl-L-methionine (SAM)-dependent reaction. The protein is Phosphomethylpyrimidine synthase of Burkholderia cenocepacia (strain ATCC BAA-245 / DSM 16553 / LMG 16656 / NCTC 13227 / J2315 / CF5610) (Burkholderia cepacia (strain J2315)).